The following is a 304-amino-acid chain: MKEFIVLSEEVKAGQAKGLPIVALESTIISHGMPYPQNVQTAREVEQIIRDNGAVPATIALIDGKIKIGLSDEELEMFGNAQGVAKASRRDLGYLLATKKLGATTVAATMICAELAGIEIFVTGGIGGVHRGAETTMDVSADLEELAQTNVAVICAGAKSILDIGLTLEYLETKGVPVVGYGTDELPAFYTRQSGFDVNFQLDTPEEIAEMLSAKWQLGLKGGAVIANPIPEAEALEHGFITNIIEKALVEAEENGIQGKNVTPFLLGKVKELTEGKSLDANIALVKNNAVVGAKIAVAFNQLH.

The active-site Proton donor is Glu-25. 2 residues coordinate substrate: Lys-86 and Val-106. Position 138 (Asp-138) interacts with Mn(2+). 140–142 (SAD) is a binding site for substrate. Lys-159 serves as the catalytic Nucleophile.

The protein belongs to the pseudouridine-5'-phosphate glycosidase family. As to quaternary structure, homotrimer. Requires Mn(2+) as cofactor.

It carries out the reaction D-ribose 5-phosphate + uracil = psi-UMP + H2O. Its function is as follows. Catalyzes the reversible cleavage of pseudouridine 5'-phosphate (PsiMP) to ribose 5-phosphate and uracil. Functions biologically in the cleavage direction, as part of a pseudouridine degradation pathway. This chain is Pseudouridine-5'-phosphate glycosidase, found in Lysinibacillus sphaericus (strain C3-41).